A 456-amino-acid chain; its full sequence is Cysteine--tRNA ligase (456 aa).

Residue C30 participates in Zn(2+) binding. Positions 32 to 42 (MTVYDFCHIGH) match the 'HIGH' region motif. Residues C211, H236, and E240 each contribute to the Zn(2+) site. Residues 268–272 (KMSKS) carry the 'KMSKS' region motif. K271 contributes to the ATP binding site.

The protein belongs to the class-I aminoacyl-tRNA synthetase family. As to quaternary structure, monomer. Requires Zn(2+) as cofactor.

It is found in the cytoplasm. It catalyses the reaction tRNA(Cys) + L-cysteine + ATP = L-cysteinyl-tRNA(Cys) + AMP + diphosphate. The protein is Cysteine--tRNA ligase of Dichelobacter nodosus (strain VCS1703A).